Here is a 331-residue protein sequence, read N- to C-terminus: Eukaryotic translation initiation factor 2 subunit 2 (331 aa).

Disordered regions lie at residues 1–75 (MSGD…DLNF) and 97–120 (AIKD…LDIM). Ser2 is modified (N-acetylserine). Phosphoserine occurs at positions 2 and 13. The segment covering 13–22 (SKKKKKKKKP) has biased composition (basic residues). The residue at position 36 (Thr36) is a Phosphothreonine. Positions 40-51 (ETKEVEPEPTEE) are enriched in basic and acidic residues. Phosphoserine is present on Ser67. Lys102 participates in a covalent cross-link: Glycyl lysine isopeptide (Lys-Gly) (interchain with G-Cter in SUMO2). Ser105 carries the phosphoserine modification. Residues 106–118 (DAQEPAEPEDDLD) are compositionally biased toward acidic residues. Phosphoserine is present on residues Ser158 and Ser216. Residues Lys263 and Lys291 each carry the N6-acetyllysine modification. The C4-type zinc-finger motif lies at 279-303 (CHTCRSPDTILQKDTRLYFLQCETC).

Belongs to the eIF-2-beta/eIF-5 family. In terms of assembly, eukaryotic translation initiation factor 2 eIF2 is a heterotrimeric complex composed of an alpha (EIF2S1), a beta (EIF2S2) and a gamma (EIF2S3) chain. eIF2 is member of the 43S pre-initiation complex (43S PIC). eIF2 forms a complex with at least CELF1/CUGBP1, CALR, CALR3, EIF2S1, EIF2S2, HSP90B1 and HSPA5. Interacts with BZW2/5MP1. Interacts with EIF5.

The protein localises to the cytoplasm. Its subcellular location is the cytosol. Functionally, component of the eIF2 complex that functions in the early steps of protein synthesis by forming a ternary complex with GTP and initiator tRNA. This complex binds to a 40S ribosomal subunit, followed by mRNA binding to form the 43S pre-initiation complex (43S PIC). Junction of the 60S ribosomal subunit to form the 80S initiation complex is preceded by hydrolysis of the GTP bound to eIF2 and release of an eIF2-GDP binary complex. In order for eIF2 to recycle and catalyze another round of initiation, the GDP bound to eIF2 must exchange with GTP by way of a reaction catalyzed by eIF2B. This chain is Eukaryotic translation initiation factor 2 subunit 2 (Eif2s2), found in Mus musculus (Mouse).